We begin with the raw amino-acid sequence, 163 residues long: Calcium-binding protein 2 (163 aa).

Residue Gly-2 is the site of N-myristoyl glycine attachment. EF-hand domains lie at 21 to 56, 72 to 89, 95 to 130, and 132 to 163; these read EEIE…LGYM, GKVD…KLLA, IGVR…LLGE, and LSQR…MMSR. Ca(2+)-binding residues include Asp-34, Asp-36, Asp-38, Tyr-40, and Glu-45. Ca(2+) is bound by residues Asp-108, Asn-110, Asp-112, Cys-114, Glu-119, Asp-145, Asn-147, Asp-149, and Glu-156.

It localises to the cytoplasm. The protein resides in the perinuclear region. Its subcellular location is the cell membrane. The protein localises to the golgi apparatus. Required for sound encoding at inner hair cells (IHCs) synapses, likely via inhibition of the inactivation of voltage-gated calcium channel of type 1.3 (Cav1.3) in the IHCs. Required for the normal transfer of light signals through the retina. This chain is Calcium-binding protein 2 (CABP2), found in Bos taurus (Bovine).